A 230-amino-acid polypeptide reads, in one-letter code: MSEIKDIVVQGLWKNNSALVQLLGLCPLLAVTSTATNALGLGLATTLVLTLTNLTVSALRRWTPAEIRIPIYVMIIASVVSAVQMLINAYAFGLYQSLGIFIPLIVTNCIVVGRAEAFAAKKGPWLSALDGFSIGMGATGAMFVLGSLREILGNGTLFDGADSLLGSWAKVLRVEIFHTDSPFLLAMLPPGAFIGLGLMLAVKYLIDEKMKKRRAETAPSAVPAGETGKV.

6 consecutive transmembrane segments (helical) span residues alanine 18–alanine 38, leucine 39–leucine 59, threonine 63–valine 83, leucine 86–valine 106, tryptophan 125–leucine 145, and proline 182–valine 202.

It belongs to the NqrDE/RnfAE family. The complex is composed of six subunits: RsxA, RsxB, RsxC, RsxD, RsxE and RsxG.

It localises to the cell inner membrane. Its function is as follows. Part of a membrane-bound complex that couples electron transfer with translocation of ions across the membrane. Required to maintain the reduced state of SoxR. The polypeptide is Ion-translocating oxidoreductase complex subunit E (Salmonella newport (strain SL254)).